A 340-amino-acid chain; its full sequence is Methionine import ATP-binding protein MetN 1 (340 aa).

The ABC transporter domain maps to 2–242 (IRLENVSVDF…PQHAYTKQLV (241 aa)). 39 to 46 (GTSGAGKS) provides a ligand contact to ATP.

The protein belongs to the ABC transporter superfamily. Methionine importer (TC 3.A.1.24) family. As to quaternary structure, the complex is composed of two ATP-binding proteins (MetN), two transmembrane proteins (MetI) and a solute-binding protein (MetQ).

It is found in the cell inner membrane. The catalysed reaction is L-methionine(out) + ATP + H2O = L-methionine(in) + ADP + phosphate + H(+). It catalyses the reaction D-methionine(out) + ATP + H2O = D-methionine(in) + ADP + phosphate + H(+). In terms of biological role, part of the ABC transporter complex MetNIQ involved in methionine import. Responsible for energy coupling to the transport system. This chain is Methionine import ATP-binding protein MetN 1, found in Pectobacterium atrosepticum (strain SCRI 1043 / ATCC BAA-672) (Erwinia carotovora subsp. atroseptica).